A 393-amino-acid polypeptide reads, in one-letter code: Ferrochelatase, mitochondrial (393 aa).

Residues 1-31 (MLSRTIRTQGSFLRRSQLTITRSFSVTFNMQ) constitute a mitochondrion transit peptide. D351 is an active-site residue.

This sequence belongs to the ferrochelatase family. In terms of processing, the leader peptide may be processed in two proteolytic steps, first between Ser-23 and Phe-24, second and by a different protease, to yield the mature protein.

It localises to the mitochondrion inner membrane. The catalysed reaction is heme b + 2 H(+) = protoporphyrin IX + Fe(2+). The protein operates within porphyrin-containing compound metabolism; protoheme biosynthesis; protoheme from protoporphyrin-IX: step 1/1. Its function is as follows. Catalyzes the ferrous insertion into protoporphyrin IX. This is Ferrochelatase, mitochondrial (HEM15) from Saccharomyces cerevisiae (strain ATCC 204508 / S288c) (Baker's yeast).